The sequence spans 622 residues: 1,4-alpha-glucan branching enzyme GlgB (622 aa).

The Nucleophile role is filled by Asp306. Glu358 (proton donor) is an active-site residue. The interval 581-606 (YGGSNVGNRGAVHSDPVEKHGHSHSL) is disordered.

Belongs to the glycosyl hydrolase 13 family. GlgB subfamily. In terms of assembly, monomer.

The enzyme catalyses Transfers a segment of a (1-&gt;4)-alpha-D-glucan chain to a primary hydroxy group in a similar glucan chain.. It participates in glycan biosynthesis; glycogen biosynthesis. Its function is as follows. Catalyzes the formation of the alpha-1,6-glucosidic linkages in glycogen by scission of a 1,4-alpha-linked oligosaccharide from growing alpha-1,4-glucan chains and the subsequent attachment of the oligosaccharide to the alpha-1,6 position. This is 1,4-alpha-glucan branching enzyme GlgB from Salinibacter ruber (strain DSM 13855 / M31).